Consider the following 166-residue polypeptide: Cofilin-1 (166 aa).

Ala2 bears the N-acetylalanine mark. A phosphoserine mark is found at Ser3 and Ser8. The 150-residue stretch at 4–153 (GVAVSDGVIK…KDRCTLAEKL (150 aa)) folds into the ADF-H domain. At Lys13 the chain carries N6-acetyllysine. Phosphothreonine is present on Thr25. The Nuclear localization signal signature appears at 30–34 (KKRKK). Ser41 carries the post-translational modification Phosphoserine. Position 68 is a phosphotyrosine (Tyr68). Lys73 bears the N6-acetyllysine mark. Lys132 participates in a covalent cross-link: Glycyl lysine isopeptide (Lys-Gly) (interchain with G-Cter in SUMO2). Residue Tyr140 is modified to Phosphotyrosine. Lys144 carries the N6-acetyllysine modification. A Phosphoserine modification is found at Ser156.

It belongs to the actin-binding proteins ADF family. Can bind G- and F-actin in a 1:1 ratio of cofilin to actin. It is a major component of intranuclear and cytoplasmic actin rods. Interacts with the subcortical maternal complex (SCMC) via interaction with TLE6 and NLRP5. Interacts with C9orf72. Post-translationally, inactivated by phosphorylation on Ser-3. Phosphorylated on Ser-3 in resting cells. Dephosphorylated by PDXP/chronophin; this restores its activity in promoting actin filament depolymerization. The phosphorylation of Ser-24 may prevent recognition of the nuclear localization signal. Phosphorylated via a ARRB1-RAC1-LIMK1-PAK1 cascade upon active ligand stimulation of atypical chemokine receptor ACKR2.

The protein localises to the nucleus matrix. Its subcellular location is the cytoplasm. It localises to the cytoskeleton. The protein resides in the cell projection. It is found in the ruffle membrane. The protein localises to the lamellipodium membrane. Its subcellular location is the lamellipodium. It localises to the growth cone. The protein resides in the axon. Its function is as follows. Binds to F-actin and exhibits pH-sensitive F-actin depolymerizing activity. Important for normal progress through mitosis and normal cytokinesis. In conjunction with the subcortical maternal complex (SCMC), plays an essential role for zygotes to progress beyond the first embryonic cell divisions via regulation of actin dynamics. Required for the centralization of the mitotic spindle and symmetric division of zygotes. Plays a role in the regulation of cell morphology and cytoskeletal organization in epithelial cells. Required for the up-regulation of atypical chemokine receptor ACKR2 from endosomal compartment to cell membrane, increasing its efficiency in chemokine uptake and degradation. Required for neural tube morphogenesis and neural crest cell migration. The chain is Cofilin-1 (Cfl1) from Rattus norvegicus (Rat).